The primary structure comprises 155 residues: RNA pyrophosphohydrolase (155 aa).

The Nudix hydrolase domain maps to 5 to 147 (KYRPNVAAII…KRQVYRQVIA (143 aa)). Residues 42 to 63 (GGIDEGETPLEALYRELLEEIG) carry the Nudix box motif.

Belongs to the Nudix hydrolase family. RppH subfamily. The cofactor is a divalent metal cation.

Accelerates the degradation of transcripts by removing pyrophosphate from the 5'-end of triphosphorylated RNA, leading to a more labile monophosphorylated state that can stimulate subsequent ribonuclease cleavage. This chain is RNA pyrophosphohydrolase, found in Helicobacter pylori (strain P12).